Reading from the N-terminus, the 70-residue chain is Large ribosomal subunit protein bL31 (70 aa).

Residues cysteine 16, cysteine 18, cysteine 38, and cysteine 41 each coordinate Zn(2+).

It belongs to the bacterial ribosomal protein bL31 family. Type A subfamily. Part of the 50S ribosomal subunit. It depends on Zn(2+) as a cofactor.

Binds the 23S rRNA. This is Large ribosomal subunit protein bL31 from Bifidobacterium longum (strain DJO10A).